The following is a 767-amino-acid chain: Cap-specific mRNA (nucleoside-2'-O-)-methyltransferase 2 (767 aa).

Residues 109–322 form the Adrift-type SAM-dependent 2'-O-MTase domain; the sequence is ELCTQAWCKF…VYVVCLRYKG (214 aa). The active site involves lysine 117. Residues glycine 148, tryptophan 167, and aspartate 235 each contribute to the S-adenosyl-L-methionine site. The active site involves aspartate 235. Lysine 275 serves as the catalytic Proton acceptor.

The protein localises to the nucleus. It localises to the cytoplasm. The catalysed reaction is a 5'-end (N(7)-methyl 5'-triphosphoguanosine)-(2'-O-methyl-ribonucleoside)-(ribonucleotide) in mRNA + S-adenosyl-L-methionine = a 5'-end (N(7)-methyl 5'-triphosphoguanosine)-(2'-O-methyl-ribonucleoside)-(2'-O-methyl-ribonucleotide) in mRNA + S-adenosyl-L-homocysteine + H(+). S-adenosyl-L-methionine-dependent methyltransferase that mediates mRNA cap2 2'-O-ribose methylation to the 5'-cap structure of mRNAs. Methylates the ribose of the second nucleotide of a m(7)GpppG-capped mRNA and small nuclear RNA (snRNA) (cap0) to produce m(7)GpppRmpNm (cap2). Recognizes a guanosine cap on RNA independently of its N(7) methylation status. Display cap2 methylation on both cap0 and cap1. Displays a preference for cap1 RNAs. In Mus musculus (Mouse), this protein is Cap-specific mRNA (nucleoside-2'-O-)-methyltransferase 2 (Cmtr2).